The primary structure comprises 617 residues: Putative type VI secretion system protein VgrGB (617 aa).

The interval 449–469 (RTFHATNPSPYPLPASKTRTS) is disordered.

It belongs to the VgrG protein family.

Its function is as follows. A Vgr protein that is probably part of a type VI secretion system (T6SS). May be required for export of proteins involved in Rhs-mediated cellular contact-dependent growth inhibition (CDI). This Dickeya dadantii (strain 3937) (Erwinia chrysanthemi (strain 3937)) protein is Putative type VI secretion system protein VgrGB (vgrGB).